Here is a 478-residue protein sequence, read N- to C-terminus: Phosphatidylinositol 4-kinase type 2-alpha (478 aa).

Methionine 1 bears the N-acetylmethionine mark. Positions 1–57 (MDETSPLVSPERAQPPEYTFPSVSGAHFPQVPGGAVRVAAAGSGPSPPCSPGHDRER) are disordered. 5 positions are modified to phosphoserine: serine 5, serine 9, serine 43, serine 46, and serine 50. Low complexity predominate over residues 31 to 44 (VPGGAVRVAAAGSG). A PI3K/PI4K catalytic domain is found at 123-452 (SIYPERIYQG…VQMPPVIVET (330 aa)). The G-loop stretch occupies residues 129 to 135 (IYQGSSG). Residues 130-136 (YQGSSGS) and lysine 151 each bind ATP. The segment at 156 to 158 (EPY) is important for substrate binding. The tract at residues 164–177 (KWTKWLQKLCCPCC) is important for interaction with membranes. 4 S-palmitoyl cysteine lipidation sites follow: cysteine 173, cysteine 174, cysteine 176, and cysteine 177. 260–263 (QLFV) lines the ATP pocket. The interval 267 to 275 (KDADYWLRR) is important for interaction with membranes. A catalytic loop region spans residues 304-312 (RNTDRGNDN). Positions 343–363 (AIDNGLAFPLKHPDSWRAYPF) are activation loop. ATP is bound at residue aspartate 345. The interval 358–367 (WRAYPFYWAW) is important for interaction with membranes. Serine 461 is modified (phosphoserine).

This sequence belongs to the PI3/PI4-kinase family. Type II PI4K subfamily. Associates with the BLOC-1 and the AP-3 complexes; the BLOC-1 complex is required for optimal binding of PI4K2A to the AP-3 complex. Interacts with BLOC1S5 and DTNBP1. Interacts with FOS; this interaction may enhance phosphatidylinositol phosphorylation activity. Interacts with ITCH. Interacts with ATG9A. Ubiquitinated by ITCH; this does not lead to proteasomal degradation. In terms of processing, palmitoylated. Palmitoylated by ZDHHC3 and ZDHHC7 in the CCPCC motif. Palmitoylation is cholesterol-dependent, and required for TGN localization. Detected in adult brain, especially in neurons in the cerebellum, brain cortex, dorsal root ganglion and spinal cord (at protein level).

Its subcellular location is the golgi apparatus. The protein resides in the trans-Golgi network membrane. The protein localises to the membrane raft. It is found in the endosome. It localises to the endosome membrane. Its subcellular location is the cytoplasmic vesicle. The protein resides in the cell projection. The protein localises to the dendrite. It is found in the presynaptic cell membrane. It localises to the synapse. Its subcellular location is the synaptosome. The protein resides in the mitochondrion. The protein localises to the membrane. It is found in the cell membrane. It localises to the perikaryon. Its subcellular location is the neuron projection. The catalysed reaction is a 1,2-diacyl-sn-glycero-3-phospho-(1D-myo-inositol) + ATP = a 1,2-diacyl-sn-glycero-3-phospho-(1D-myo-inositol 4-phosphate) + ADP + H(+). Membrane-bound phosphatidylinositol-4 kinase (PI4-kinase) that catalyzes the phosphorylation of phosphatidylinositol (PI) to phosphatidylinositol 4-phosphate (PI4P), a lipid that plays important roles in endocytosis, Golgi function, protein sorting and membrane trafficking and is required for prolonged survival of neurons. Besides, phosphorylation of phosphatidylinositol (PI) to phosphatidylinositol 4-phosphate (PI4P) is the first committed step in the generation of phosphatidylinositol 4,5-bisphosphate (PIP2), a precursor of the second messenger inositol 1,4,5-trisphosphate (InsP3). This is Phosphatidylinositol 4-kinase type 2-alpha (Pi4k2a) from Rattus norvegicus (Rat).